Here is a 160-residue protein sequence, read N- to C-terminus: MKIYTQRLEDISPDQAFETVELTFDTRQKSRFRAALASGVDIGADLPRTGILRSGSYIATQEGDVLRVDAKPERLMKVTAQTEFDLLKAAYHLGNRHVPLMLTPTALYFEPDHVLAEMVEGLGLTVTETDHPFEPESGAYAQHSHDHRLSPIKALHHVHS.

It belongs to the UreE family.

Its subcellular location is the cytoplasm. Involved in urease metallocenter assembly. Binds nickel. Probably functions as a nickel donor during metallocenter assembly. The protein is Urease accessory protein UreE of Acinetobacter baumannii (strain AB307-0294).